Here is a 100-residue protein sequence, read N- to C-terminus: MACSTLPKSPKDKIDPRDLLIPLILFLSLKGARSAAPGSSPHQVYNITWEVTNGDRETVWAISGRLYVSGRDPGLTFGIRLRYQNLGPRVPIGPNPVLAD.

A signal peptide spans 1–34; that stretch reads MACSTLPKSPKDKIDPRDLLIPLILFLSLKGARS. Residue asparagine 46 is glycosylated (N-linked (GlcNAc...) asparagine; by host).

Its subcellular location is the virion membrane. The polypeptide is Envelope glycoprotein (env) (Myeloproliferative leukemia virus (MpLV)).